A 217-amino-acid chain; its full sequence is Proteasome subunit beta type-9 (217 aa).

Residues 1–18 constitute a propeptide, removed in mature form; that stretch reads MLEESSEPGWLSEEVKTG. The active-site Nucleophile is the Thr19.

It belongs to the peptidase T1B family. The 26S proteasome consists of a 20S proteasome core and two 19S regulatory subunits. The 20S proteasome core is composed of 28 subunits that are arranged in four stacked rings, resulting in a barrel-shaped structure. The two end rings are each formed by seven alpha subunits, and the two central rings are each formed by seven beta subunits. The catalytic chamber with the active sites is on the inside of the barrel. Component of the immunoproteasome, where it displaces the equivalent housekeeping subunit PSMB6. Autocleaved. The resulting N-terminal Thr residue of the mature subunit is responsible for the nucleophile proteolytic activity.

Its subcellular location is the cytoplasm. It is found in the nucleus. It catalyses the reaction Cleavage of peptide bonds with very broad specificity.. Functionally, the proteasome is a multicatalytic proteinase complex which is characterized by its ability to cleave peptides with Arg, Phe, Tyr, Leu, and Glu adjacent to the leaving group at neutral or slightly basic pH. The proteasome has an ATP-dependent proteolytic activity. This subunit is involved in antigen processing to generate class I binding peptides. This chain is Proteasome subunit beta type-9 (psmb9-a), found in Salmo salar (Atlantic salmon).